We begin with the raw amino-acid sequence, 142 residues long: Transcriptional regulator MraZ (142 aa).

2 consecutive SpoVT-AbrB domains span residues 5-51 (ASAL…PRPE) and 77-120 (AADV…DAAT).

It belongs to the MraZ family. Forms oligomers.

The protein resides in the cytoplasm. The protein localises to the nucleoid. This chain is Transcriptional regulator MraZ, found in Ralstonia nicotianae (strain ATCC BAA-1114 / GMI1000) (Ralstonia solanacearum).